We begin with the raw amino-acid sequence, 162 residues long: Protein A49R (162 aa).

It belongs to the poxviridae A49 protein family. In terms of assembly, interacts with host BTRC; this interaction inhibits NF-kappa-B activation.

Its subcellular location is the host cytoplasm. The protein resides in the host nucleus. Plays a role in the inhibition of host NF-kappa-B activation. Interacts with host BTRC and thereby diminishes ubiquitination of NF-kappa-B inhibitor alpha/NFKBIA. This stabilizes NFKBIA and its interaction with NF-kappaB, so retaining p65/RELA in the cytoplasm and preventing NF-kappa-B-dependent gene expression. This chain is Protein A49R, found in Bos taurus (Bovine).